A 215-amino-acid polypeptide reads, in one-letter code: Probable septum site-determining protein MinC (215 aa).

Belongs to the MinC family. In terms of assembly, interacts with MinD and FtsZ.

Cell division inhibitor that blocks the formation of polar Z ring septums. Rapidly oscillates between the poles of the cell to destabilize FtsZ filaments that have formed before they mature into polar Z rings. Prevents FtsZ polymerization. The polypeptide is Probable septum site-determining protein MinC (Clostridium botulinum (strain Alaska E43 / Type E3)).